A 701-amino-acid polypeptide reads, in one-letter code: Peptide transporter CstA (701 aa).

The Cytoplasmic segment spans residues 1–6 (MNKSGK). A helical membrane pass occupies residues 7–27 (YLVWTVLSVMGAFALGYIALN). At 28–33 (RGEQIN) the chain is on the periplasmic side. The helical transmembrane segment at 34–54 (ALWIVVASVCIYLIAYRFYGL) threads the bilayer. Residues 55 to 86 (YIAKNVLAVDPTRMTPAVRHNDGLDYVPTDKK) are Cytoplasmic-facing. A helical transmembrane segment spans residues 87 to 107 (VLFGHHFAAIAGAGPLVGPVL). Topologically, residues 108-117 (AAQMGYLPGM) are periplasmic. Residues 118-138 (IWLLAGVVLAGAVQDFMVLFV) form a helical membrane-spanning segment. Over 139 to 160 (STRRDGRSLGELVKEEMGPTAG) the chain is Cytoplasmic. A helical membrane pass occupies residues 161 to 181 (VIALVACFMIMVIILAVLAMI). At 182–189 (VVKALTHS) the chain is on the periplasmic side. The helical transmembrane segment at 190 to 210 (PWGTYTVAFTIPLALFMGIYL) threads the bilayer. At 211–217 (RYLRPGR) the chain is on the cytoplasmic side. The helical transmembrane segment at 218-238 (IGEVSVIGLVFLIFAIISGGW) threads the bilayer. Over 239 to 255 (VAESPTWAPYFDFTGVQ) the chain is Periplasmic. A helical membrane pass occupies residues 256–276 (LTWMLVGYGFVAAVLPVWLLL). Over 277 to 280 (APRD) the chain is Cytoplasmic. A helical membrane pass occupies residues 281–301 (YLSTFLKIGTIVGLAVGILIM). Topologically, residues 302-324 (RPTLTMPALTKFVDGTGPVWTGN) are periplasmic. The chain crosses the membrane as a helical span at residues 325–345 (LFPFLFITIACGAVSGFHALI). The Cytoplasmic segment spans residues 346-372 (SSGTTPKMLANEGQACFIGYGGMLMES). A helical membrane pass occupies residues 373-393 (FVAIMALVSACIIDPGVYFAM). The Periplasmic portion of the chain corresponds to 394-395 (NS). A helical transmembrane segment spans residues 396–416 (PMAVLAPAGTADVVASAAQVV). Residues 417–439 (SSWGFSITPDTLNQIASEVGEQS) are Cytoplasmic-facing. A helical transmembrane segment spans residues 440 to 460 (IISRAGGAPTLAVGMAYILHG). At 461–463 (ALG) the chain is on the periplasmic side. A helical membrane pass occupies residues 464-484 (GMMDVAFWYHFAILFEALFIL). Residues 485 to 523 (TAVDAGTRAARFMLQDLLGVVSPGLKRTDSLPANLLATA) lie on the Cytoplasmic side of the membrane. Residues 524–544 (LCVLAWGYFLHQGVVDPLGGI) form a helical membrane-spanning segment. At 545 to 550 (NTLWPL) the chain is on the periplasmic side. The helical transmembrane segment at 551–571 (FGIANQMLAGMALMLCAVVLF) threads the bilayer. Residues 572–577 (KMKRQR) lie on the Cytoplasmic side of the membrane. A helical transmembrane segment spans residues 578-598 (YAWVALVPTAWLLICTLTAGW). Over 599-643 (QKAFSPDAKVGFLAIANKFQAMIDSGNIPSQYTESQLAQLVFNNR) the chain is Periplasmic. The helical transmembrane segment at 644 to 664 (LDAGLTIFFMVVVVVLALFSI) threads the bilayer. Topologically, residues 665-701 (KTALAALKDPKPTAKETPYEPMPENVEEIVAQAKGAH) are cytoplasmic.

This sequence belongs to the peptide transporter carbon starvation (CstA) (TC 2.A.114) family.

It is found in the cell inner membrane. Functionally, involved in peptide utilization during carbon starvation. The protein is Peptide transporter CstA of Escherichia coli (strain K12).